Here is a 693-residue protein sequence, read N- to C-terminus: Polyribonucleotide nucleotidyltransferase (693 aa).

Positions 489 and 495 each coordinate Mg(2+). A KH domain is found at Pro-556–Val-615. Residues Gly-625–Arg-693 enclose the S1 motif domain.

It belongs to the polyribonucleotide nucleotidyltransferase family. In terms of assembly, component of the RNA degradosome, which is a multiprotein complex involved in RNA processing and mRNA degradation. Requires Mg(2+) as cofactor.

It is found in the cytoplasm. The enzyme catalyses RNA(n+1) + phosphate = RNA(n) + a ribonucleoside 5'-diphosphate. Involved in mRNA degradation. Catalyzes the phosphorolysis of single-stranded polyribonucleotides processively in the 3'- to 5'-direction. This is Polyribonucleotide nucleotidyltransferase from Francisella philomiragia subsp. philomiragia (strain ATCC 25017 / CCUG 19701 / FSC 153 / O#319-036).